The primary structure comprises 312 residues: MLQYQIDRIDHQIADDRSQTGTFLIGPLERGQATTLGNSLRRVLMGGLEGSAVTAVRIAGINHEYATIPGVREDVLDILLNCKQLSINSSSPDLEIGRLVASGPMDVKANDIQFSSQVEIVDGEKPIATIQEGHNLELEIHVERGVGYRPVDRKSEETTAIDLLQIDAVFMPVKRVNFTIDETAVAEGGTGRERLKMEVVTDGSTSPDDAIAEAANQLIELFQPLATVTMVEEIPEEPEPSPEAQIPLEELNLSVRAYNCLKRAQVNSVSDLMGFSYEDLLEIKNFGSKSADEVIDALERIGISIPQSRTSV.

The interval 1 to 229 is alpha N-terminal domain (alpha-NTD); the sequence is MLQYQIDRID…ELFQPLATVT (229 aa). Residues 241–312 form an alpha C-terminal domain (alpha-CTD) region; it reads SPEAQIPLEE…ISIPQSRTSV (72 aa).

Belongs to the RNA polymerase alpha chain family. As to quaternary structure, in cyanobacteria the RNAP catalytic core is composed of 2 alpha, 1 beta, 1 beta', 1 gamma and 1 omega subunit. When a sigma factor is associated with the core the holoenzyme is formed, which can initiate transcription.

The enzyme catalyses RNA(n) + a ribonucleoside 5'-triphosphate = RNA(n+1) + diphosphate. In terms of biological role, DNA-dependent RNA polymerase catalyzes the transcription of DNA into RNA using the four ribonucleoside triphosphates as substrates. This chain is DNA-directed RNA polymerase subunit alpha, found in Prochlorococcus marinus (strain MIT 9215).